The chain runs to 155 residues: Aspartate carbamoyltransferase regulatory chain (155 aa).

Zn(2+) is bound by residues cysteine 113, cysteine 118, cysteine 139, and cysteine 142.

It belongs to the PyrI family. As to quaternary structure, contains catalytic and regulatory chains. Zn(2+) serves as cofactor.

Its function is as follows. Involved in allosteric regulation of aspartate carbamoyltransferase. The protein is Aspartate carbamoyltransferase regulatory chain of Methanoculleus marisnigri (strain ATCC 35101 / DSM 1498 / JR1).